The sequence spans 769 residues: Integrin beta-8 (769 aa).

The signal sequence occupies residues 1–42 (MCGSALAFFTAAFVCLQNDRRGPASFLWAAWVFSLVLGLGQG). Topologically, residues 43 to 684 (EDNRCASSNA…ECFSSPSYLR (642 aa)) are extracellular. Residues 46–95 (RCASSNAASCARCLALGPECGWCVQEDFISGGSRSERCDIVSNLISKGCS) form the PSI domain. 25 cysteine pairs are disulfide-bonded: C47–C65, C55–C469, C58–C83, C68–C94, C211–C218, C266–C307, C407–C419, C439–C467, C471–C491, C471–C494, C481–C494, C499–C528, C511–C526, C520–C531, C533–C546, C553–C567, C561–C572, C574–C583, C585–C609, C593–C607, C601–C612, C614–C624, C627–C630, C634–C661, and C640–C657. The VWFA domain occupies 146 to 384 (PVDLYYLVDV…NLVVEAYQKL (239 aa)). Mg(2+)-binding residues include D154 and S156. Ca(2+) is bound at residue D193. N-linked (GlcNAc...) asparagine glycosylation is present at N233. The Ca(2+) site is built by N249, D251, P253, and E254. A Mg(2+)-binding site is contributed by E254. N-linked (GlcNAc...) asparagine glycosylation is present at N402. N421, N431, N456, and N466 each carry an N-linked (GlcNAc...) asparagine glycan. I-EGF domains are found at residues 471-495 (CEDN…FQCD), 499-547 (CHFD…KYCE), 548-584 (KDDF…DRCQ), and 585-625 (CPSA…RFCE). N-linked (GlcNAc...) asparagine glycosylation is present at N648. The chain crosses the membrane as a helical span at residues 685–704 (IFFIIFIVTFLIGLLKVLII). Residues 705 to 769 (RQVILQWNSN…NAHETFRCNF (65 aa)) are Cytoplasmic-facing.

This sequence belongs to the integrin beta chain family. In terms of assembly, heterodimer of an alpha and a beta subunit. Beta-8 (ITGB8) associates with alpha-V (ITGAV) to form ITGAV:ITGB8. ITGAV:ITGB8 interacts with TGFB1. In terms of tissue distribution, placenta, kidney, brain, ovary, uterus and in several transformed cells. Transiently expressed in 293 human embryonic kidney cells.

It localises to the cell membrane. Integrin alpha-V:beta-8 (ITGAV:ITGB8) is a receptor for fibronectin. It recognizes the sequence R-G-D in its ligands. Integrin alpha-V:beta-6 (ITGAV:ITGB6) mediates R-G-D-dependent release of transforming growth factor beta-1 (TGF-beta-1) from regulatory Latency-associated peptide (LAP), thereby playing a key role in TGF-beta-1 activation on the surface of activated regulatory T-cells (Tregs). Required during vasculogenesis. The sequence is that of Integrin beta-8 from Homo sapiens (Human).